The following is a 122-amino-acid chain: Large ribosomal subunit protein uL18 (122 aa).

Belongs to the universal ribosomal protein uL18 family. Part of the 50S ribosomal subunit; part of the 5S rRNA/L5/L18/L25 subcomplex. Contacts the 5S and 23S rRNAs.

Functionally, this is one of the proteins that bind and probably mediate the attachment of the 5S RNA into the large ribosomal subunit, where it forms part of the central protuberance. In Citrifermentans bemidjiense (strain ATCC BAA-1014 / DSM 16622 / JCM 12645 / Bem) (Geobacter bemidjiensis), this protein is Large ribosomal subunit protein uL18.